The sequence spans 206 residues: 2,3-bisphosphoglycerate-dependent phosphoglycerate mutase (206 aa).

Residues 9 to 16 (RHGQSEWN), 22 to 23 (TG), R61, 88 to 91 (ERDY), K99, 115 to 116 (RR), and 159 to 160 (GN) contribute to the substrate site. Residue H10 is the Tele-phosphohistidine intermediate of the active site. Residue E88 is the Proton donor/acceptor of the active site.

Belongs to the phosphoglycerate mutase family. BPG-dependent PGAM subfamily. In terms of assembly, homodimer.

It carries out the reaction (2R)-2-phosphoglycerate = (2R)-3-phosphoglycerate. Its pathway is carbohydrate degradation; glycolysis; pyruvate from D-glyceraldehyde 3-phosphate: step 3/5. Catalyzes the interconversion of 2-phosphoglycerate and 3-phosphoglycerate. In Bartonella bacilliformis (strain ATCC 35685 / KC583 / Herrer 020/F12,63), this protein is 2,3-bisphosphoglycerate-dependent phosphoglycerate mutase.